Reading from the N-terminus, the 459-residue chain is Inositol-trisphosphate 3-kinase A (459 aa).

The disordered stretch occupies residues 1-26 (MTLPGHPTGMARPRGAGPCSPGLERA). Omega-N-methylarginine is present on residues Arg35, Arg55, and Arg62. A disordered region spans residues 49 to 164 (AAAGEPRARG…TSEDVGQKSH (116 aa)). Positions 116 to 132 (RRLSTSSLSSTGSSSLL) are enriched in low complexity. 2 positions are modified to phosphoserine: Ser135 and Ser195. ATP is bound by residues Ser195, Lys207, 247-249 (QDL), and Asp260. Residues Lys262 and Arg283 each coordinate substrate. The interval 285–293 (DMYKKMLAV) is calmodulin-binding. Substrate is bound at residue 310–317 (KPRYMQWR). Positions 334 and 414 each coordinate ATP. Lys417 provides a ligand contact to substrate.

The protein belongs to the inositol phosphokinase (IPK) family.

The protein resides in the cytoplasm. It localises to the cytoskeleton. The catalysed reaction is 1D-myo-inositol 1,4,5-trisphosphate + ATP = 1D-myo-inositol 1,3,4,5-tetrakisphosphate + ADP + H(+). With respect to regulation, activated by calcium/calmodulin. In terms of biological role, catalyzes the phosphorylation of 1D-myo-inositol 1,4,5-trisphosphate (InsP3) into 1D-myo-inositol 1,3,4,5-tetrakisphosphate and participates to the regulation of calcium homeostasis. This chain is Inositol-trisphosphate 3-kinase A, found in Rattus norvegicus (Rat).